A 128-amino-acid chain; its full sequence is 3-aminoacrylate deaminase RutC (128 aa).

Belongs to the RutC family.

It catalyses the reaction (Z)-3-aminoacrylate + H2O + H(+) = 3-oxopropanoate + NH4(+). Functionally, involved in pyrimidine catabolism. Catalyzes the deamination of 3-aminoacrylate to malonic semialdehyde, a reaction that can also occur spontaneously. RutC may facilitate the reaction and modulate the metabolic fitness, rather than catalyzing essential functions. The protein is 3-aminoacrylate deaminase RutC of Serratia proteamaculans (strain 568).